Here is a 138-residue protein sequence, read N- to C-terminus: DNA-directed RNA polymerase subunit omega (138 aa).

Positions 104 to 138 (GNSDGLENSSNSRDDNPLGRDNFFSTPENRNNTNS) are disordered. Over residues 126-138 (FFSTPENRNNTNS) the composition is skewed to polar residues.

It belongs to the RNA polymerase subunit omega family. As to quaternary structure, the RNAP catalytic core consists of 2 alpha, 1 beta, 1 beta' and 1 omega subunit. When a sigma factor is associated with the core the holoenzyme is formed, which can initiate transcription.

It catalyses the reaction RNA(n) + a ribonucleoside 5'-triphosphate = RNA(n+1) + diphosphate. Its function is as follows. Promotes RNA polymerase assembly. Latches the N- and C-terminal regions of the beta' subunit thereby facilitating its interaction with the beta and alpha subunits. The polypeptide is DNA-directed RNA polymerase subunit omega (Ehrlichia chaffeensis (strain ATCC CRL-10679 / Arkansas)).